The sequence spans 90 residues: Protein AF1q (90 aa).

Residues 24-32 (LSELEGLGL) carry the Nuclear export signal motif. A Phosphoserine modification is found at Ser-84.

The protein belongs to the MLLT11 family. Interacts with HSPA8 and LAMP2 isoform A; the interaction may target MLLT11 for degradation via chaperone-mediated autophagy. Interacts with TCF7. In terms of processing, ubiquitinated, leading to degradation.

The protein resides in the nucleus. It localises to the cytoplasm. It is found in the cytoskeleton. The protein localises to the microtubule organizing center. Its subcellular location is the centrosome. Cofactor for the transcription factor TCF7. Involved in regulation of lymphoid development by driving multipotent hematopoietic progenitor cells towards a T-cell fate. This Pongo abelii (Sumatran orangutan) protein is Protein AF1q (MLLT11).